The sequence spans 433 residues: Homoserine dehydrogenase (433 aa).

The NADPH site is built by Thr13 and Val14. Val14 and Val33 together coordinate NAD(+). Val14 is an NADP(+) binding site. Lys45 and Lys105 together coordinate NADPH. Residues Lys45 and Lys105 each contribute to the NADP(+) site. The Na(+) site is built by Glu129, Val132, Gly134, and Ile136. Positions 187 and 190 each coordinate NADP(+). 2 residues coordinate L-homoserine: Glu190 and Asp201. The active-site Proton donor is Lys205. Residue Gly302 participates in NADPH binding. Gly302 lines the NAD(+) pocket. Gly302 lines the NADP(+) pocket. The ACT domain occupies 350–426 (FLRIHVKDEV…VVQEVKSTYR (77 aa)).

Belongs to the homoserine dehydrogenase family. As to quaternary structure, homotetramer. A metal cation serves as cofactor.

Its subcellular location is the cytoplasm. The protein resides in the secreted. It catalyses the reaction L-homoserine + NADP(+) = L-aspartate 4-semialdehyde + NADPH + H(+). The protein operates within amino-acid biosynthesis; L-methionine biosynthesis via de novo pathway; L-homoserine from L-aspartate: step 3/3. It participates in amino-acid biosynthesis; L-threonine biosynthesis; L-threonine from L-aspartate: step 3/5. Its activity is regulated as follows. Feedback inhibition by threonine. Activated by sodium ions. In terms of biological role, catalyzes the conversion of L-aspartate-beta-semialdehyde (L-Asa) to L-homoserine (L-Hse), the third step in the biosynthesis of threonine and methionine from aspartate. Utilizes NADPH but not NADH as coenzyme. The polypeptide is Homoserine dehydrogenase (hom) (Bacillus subtilis (strain 168)).